A 449-amino-acid chain; its full sequence is Type 3 secretion system ATPase (449 aa).

Position 178 to 183 (178 to 183 (GCGKTT)) interacts with ATP.

It belongs to the ATPase alpha/beta chains family. T3SS ATPase subfamily. The core secretion machinery of the T3SS is composed of approximately 20 different proteins, including cytoplasmic components, a base, an export apparatus and a needle. This subunit is part of the cytosolic complex. Forms homododecamers.

The protein localises to the cytoplasm. It catalyses the reaction ATP + H2O + cellular proteinSide 1 = ADP + phosphate + cellular proteinSide 2.. Functionally, ATPase component of the type III secretion system (T3SS), also called injectisome, which is used to inject bacterial effector proteins into eukaryotic host cells. Acts as a molecular motor to provide the energy that is required for the export of proteins. Required for type III secretion apparatus (T3SA) formation, proper protein secretion, host cell invasion and virulence. May play a critical role in T3SS substrate recognition, disassembly of the effector/chaperone complex and unfolding of the effector in an ATP-dependent manner prior to secretion. In Pseudomonas syringae pv. tomato (strain ATCC BAA-871 / DC3000), this protein is Type 3 secretion system ATPase.